Here is a 352-residue protein sequence, read N- to C-terminus: Aliphatic aldoxime dehydratase (352 aa).

Ser-219 is a binding site for an aliphatic aldoxime. His-299 serves as a coordination point for heme b. His-320 lines the an aliphatic aldoxime pocket. Residue His-320 is part of the active site.

This sequence belongs to the heme-containing dehydratase family. In terms of assembly, homodimer. Heme b serves as cofactor. It depends on Ca(2+) as a cofactor.

It carries out the reaction an aliphatic aldoxime = a nitrile + H2O. Active when the heme iron is in the ferrous state. Is very sensitive to AgNO(3), is also inhibited by hydroxylamine and phenylhydrazine, and hardly inhibited by thiol reagents. Not sensitive to chelating agents and serine-modifying reagents. Catalyzes the dehydration of aldoximes to their corresponding nitrile. Aliphatic aldoximes are more effective substrates than aromatic aldoximes. Shows high activity with butyraldoxime and acetaldoxime, but only weak activity with the aromatic aldoxime pyridine-2-aldoxime. Cannot use benzaldoxime, isonitrosoacetophenone and pyridine-4-aldoxime. Is involved in the metabolism of aldoxime in vivo. The protein is Aliphatic aldoxime dehydratase of Pseudomonas chlororaphis (Pseudomonas aureofaciens).